The chain runs to 492 residues: Putative BTB/POZ domain and WD-repeat protein R786 (492 aa).

The BTB domain maps to 16-86; it reads TDVEIVLIDE…FYGQIVDSTN (71 aa). WD repeat units lie at residues 241–281 and 286–325; these read QSSC…IKIK and LINR…SKGI.

Belongs to the mimivirus BTB/WD family.

The protein is Putative BTB/POZ domain and WD-repeat protein R786 of Acanthamoeba polyphaga (Amoeba).